Consider the following 372-residue polypeptide: Testis-specific serine/threonine-protein kinase 5 (372 aa).

The region spanning 27–302 (LLSSKKIGSG…LQQVAAHCWM (276 aa)) is the Protein kinase domain. ATP-binding positions include 33 to 41 (IGSGAFSKV) and Lys72. The Proton acceptor role is filled by Asp173. Residues 314–372 (GAPREQDHSWSTVAPDNTEPDRDTRHARSKGSSSSSGRTSPRRPSLAQLCNTWKPAPEQ) form a disordered region. The span at 343 to 358 (KGSSSSSGRTSPRRPS) shows a compositional bias: low complexity.

The protein belongs to the protein kinase superfamily. CAMK Ser/Thr protein kinase family. Mg(2+) is required as a cofactor. Post-translationally, autophosphorylated.

It carries out the reaction L-seryl-[protein] + ATP = O-phospho-L-seryl-[protein] + ADP + H(+). The catalysed reaction is L-threonyl-[protein] + ATP = O-phospho-L-threonyl-[protein] + ADP + H(+). With respect to regulation, activated by phosphorylation on Thr-207, potentially by autophosphorylation. Its function is as follows. May be involved in a signaling pathway during male germ cell development or mature sperm function. The protein is Testis-specific serine/threonine-protein kinase 5 of Mus musculus (Mouse).